The primary structure comprises 146 residues: Coactosin (146 aa).

In terms of domain architecture, ADF-H spans 1-132 (MADVSSTELK…NEEELMTKVR (132 aa)).

This sequence belongs to the actin-binding proteins ADF family. Coactosin subfamily. In terms of processing, the N-terminus is blocked.

The protein localises to the cytoplasm. It is found in the cytoskeleton. Its function is as follows. Binds to F-actin in a calcium independent manner. Binds to the filaments along their length. The protein is Coactosin (coaA) of Dictyostelium discoideum (Social amoeba).